The primary structure comprises 468 residues: Putative magnesium transporter MRS2-G (468 aa).

Disordered stretches follow at residues 1-76 (MGRR…AGKV) and 182-205 (NGQP…VPRL). Composition is skewed to low complexity over residues 14–23 (ASNASTSSST) and 31–45 (RLPS…SSPS). The span at 46–67 (PASPSPPPPSASHPAPPSPPLA) shows a compositional bias: pro residues. Residues 187–197 (GDDHGEKHDDS) show a composition bias toward basic and acidic residues. The next 2 membrane-spanning stretches (helical) occupy residues 402-422 (LTLT…GAFA) and 437-457 (FFWP…IVLL).

Belongs to the CorA metal ion transporter (MIT) (TC 1.A.35.5) family.

Its subcellular location is the membrane. In terms of biological role, putative magnesium transporter. This chain is Putative magnesium transporter MRS2-G (MRS2-G), found in Oryza sativa subsp. indica (Rice).